A 176-amino-acid polypeptide reads, in one-letter code: Large ribosomal subunit protein uL10 (176 aa).

This sequence belongs to the universal ribosomal protein uL10 family. As to quaternary structure, part of the ribosomal stalk of the 50S ribosomal subunit. The N-terminus interacts with L11 and the large rRNA to form the base of the stalk. The C-terminus forms an elongated spine to which L12 dimers bind in a sequential fashion forming a multimeric L10(L12)X complex.

In terms of biological role, forms part of the ribosomal stalk, playing a central role in the interaction of the ribosome with GTP-bound translation factors. The protein is Large ribosomal subunit protein uL10 of Teredinibacter turnerae (strain ATCC 39867 / T7901).